The primary structure comprises 576 residues: Mitogen-activated protein kinase 15 (576 aa).

Residues 20 to 50 (RPSSSSSSNNHDQIQNPPTVSNPNDDEDLKK) are disordered. Polar residues predominate over residues 28–42 (NNHDQIQNPPTVSNP). The 292-residue stretch at 90-381 (YQIQEVVGKG…AEEALADPYF (292 aa)) folds into the Protein kinase domain. ATP is bound by residues 96–104 (VGKGSYGVV) and lysine 119. Aspartate 216 acts as the Proton acceptor in catalysis. Threonine 252 is modified (phosphothreonine). Residues 252–254 (TDY) carry the TXY motif. Tyrosine 254 is modified (phosphotyrosine). Position 257 is a phosphothreonine (threonine 257). The segment at 458–535 (EENQGPGGRS…GGGYSARNLM (78 aa)) is disordered. Basic and acidic residues predominate over residues 477-501 (LPRERVPASKNETVEERSNDIERRT). Polar residues predominate over residues 504 to 520 (AVASTLDSPKASQQAEG).

The protein belongs to the protein kinase superfamily. CMGC Ser/Thr protein kinase family. MAP kinase subfamily. Interacts with MKK7. Post-translationally, dually phosphorylated on Thr-252 and Tyr-254, which activates the enzyme.

The catalysed reaction is L-seryl-[protein] + ATP = O-phospho-L-seryl-[protein] + ADP + H(+). The enzyme catalyses L-threonyl-[protein] + ATP = O-phospho-L-threonyl-[protein] + ADP + H(+). Activated by threonine and tyrosine phosphorylation. The sequence is that of Mitogen-activated protein kinase 15 (MPK15) from Arabidopsis thaliana (Mouse-ear cress).